A 491-amino-acid chain; its full sequence is Proline--tRNA ligase (491 aa).

Belongs to the class-II aminoacyl-tRNA synthetase family. ProS type 3 subfamily. Homodimer.

Its subcellular location is the cytoplasm. The catalysed reaction is tRNA(Pro) + L-proline + ATP = L-prolyl-tRNA(Pro) + AMP + diphosphate. Its function is as follows. Catalyzes the attachment of proline to tRNA(Pro) in a two-step reaction: proline is first activated by ATP to form Pro-AMP and then transferred to the acceptor end of tRNA(Pro). The sequence is that of Proline--tRNA ligase from Cytophaga hutchinsonii (strain ATCC 33406 / DSM 1761 / CIP 103989 / NBRC 15051 / NCIMB 9469 / D465).